The chain runs to 380 residues: Cytochrome b (380 aa).

Helical transmembrane passes span 33 to 53 (SGSL…FLAM), 77 to 98 (WLIR…YLHV), 113 to 133 (WNIG…GYVL), and 178 to 198 (FFAF…IHLL). The heme b site is built by His83 and His97. Heme b is bound by residues His182 and His196. His201 contributes to the a ubiquinone binding site. Transmembrane regions (helical) follow at residues 226–246 (YKDL…ALFS), 288–308 (LGGV…PILH), 320–340 (LSQI…WIGG), and 347–367 (FVLI…IALP).

It belongs to the cytochrome b family. As to quaternary structure, the cytochrome bc1 complex contains 3 respiratory subunits (MT-CYB, CYC1 and UQCRFS1), 2 core proteins (UQCRC1 and UQCRC2) and probably 6 low-molecular weight proteins. It depends on heme b as a cofactor.

It localises to the mitochondrion inner membrane. In terms of biological role, component of the ubiquinol-cytochrome c reductase complex (complex III or cytochrome b-c1 complex) that is part of the mitochondrial respiratory chain. The b-c1 complex mediates electron transfer from ubiquinol to cytochrome c. Contributes to the generation of a proton gradient across the mitochondrial membrane that is then used for ATP synthesis. This Polyodon spathula (North American paddlefish) protein is Cytochrome b (mt-cyb).